Consider the following 397-residue polypeptide: Enoyl-[acyl-carrier-protein] reductase [NADH] (397 aa).

Residues 48-53, 74-75, 111-112, and 139-140 each bind NAD(+); these read GASTGY, FE, DA, and LA. Position 225 (tyrosine 225) interacts with substrate. The Proton donor role is filled by tyrosine 235. NAD(+) is bound by residues lysine 244 and 273-275; that span reads VVT.

It belongs to the TER reductase family. In terms of assembly, monomer.

The enzyme catalyses a 2,3-saturated acyl-[ACP] + NAD(+) = a (2E)-enoyl-[ACP] + NADH + H(+). Its pathway is lipid metabolism; fatty acid biosynthesis. Functionally, involved in the final reduction of the elongation cycle of fatty acid synthesis (FAS II). Catalyzes the reduction of a carbon-carbon double bond in an enoyl moiety that is covalently linked to an acyl carrier protein (ACP). The polypeptide is Enoyl-[acyl-carrier-protein] reductase [NADH] (Edwardsiella ictaluri (strain 93-146)).